We begin with the raw amino-acid sequence, 482 residues long: Spore germination protein A1 (482 aa).

6 helical membrane passes run 242–262, 284–304, 321–341, 351–371, 373–393, and 406–426; these read VAILVDSSPFVLLVPVSLGIL, FASIFITLFLSSIYITLVSFH, ENVPFPPIFEALLMEVTIELL, PLGQTIGLVGGVVIGQAAVEA, LVSSILVIVVSVIALASFTVP, and FISMFSAAILGLYGIILFMLV.

This sequence belongs to the GerABKA family.

The protein localises to the cell membrane. Forms a complex at the inner spore membrane which acts as a receptor for L-alanine, thus is involved in the stimulation of germination in response to alanine. Can stimulate germination in the absence of GerD and GerK gene products (fructose and glucose receptors, respectively), but the response is improved in their presence. The polypeptide is Spore germination protein A1 (gerAA) (Bacillus subtilis (strain 168)).